The primary structure comprises 81 residues: Acyl carrier protein (81 aa).

A Carrier domain is found at 5–80 (EEIFSKVKSI…DIVSYIEKKL (76 aa)). The residue at position 40 (S40) is an O-(pantetheine 4'-phosphoryl)serine.

This sequence belongs to the acyl carrier protein (ACP) family. 4'-phosphopantetheine is transferred from CoA to a specific serine of apo-ACP by AcpS. This modification is essential for activity because fatty acids are bound in thioester linkage to the sulfhydryl of the prosthetic group.

It is found in the cytoplasm. It functions in the pathway lipid metabolism; fatty acid biosynthesis. In terms of biological role, carrier of the growing fatty acid chain in fatty acid biosynthesis. The sequence is that of Acyl carrier protein from Thermotoga maritima (strain ATCC 43589 / DSM 3109 / JCM 10099 / NBRC 100826 / MSB8).